The following is a 122-amino-acid chain: Large ribosomal subunit protein uL14 (122 aa).

It belongs to the universal ribosomal protein uL14 family. Part of the 50S ribosomal subunit. Forms a cluster with proteins L3 and L19. In the 70S ribosome, L14 and L19 interact and together make contacts with the 16S rRNA in bridges B5 and B8.

Binds to 23S rRNA. Forms part of two intersubunit bridges in the 70S ribosome. This chain is Large ribosomal subunit protein uL14, found in Thiobacillus denitrificans (strain ATCC 25259 / T1).